We begin with the raw amino-acid sequence, 424 residues long: Serine--tRNA ligase (424 aa).

Residue 230 to 232 (TAE) coordinates L-serine. Position 261-263 (261-263 (RSE)) interacts with ATP. E284 lines the L-serine pocket. Residue 348-351 (EISS) coordinates ATP. L-serine is bound at residue S384.

Belongs to the class-II aminoacyl-tRNA synthetase family. Type-1 seryl-tRNA synthetase subfamily. Homodimer. The tRNA molecule binds across the dimer.

The protein resides in the cytoplasm. It carries out the reaction tRNA(Ser) + L-serine + ATP = L-seryl-tRNA(Ser) + AMP + diphosphate + H(+). The catalysed reaction is tRNA(Sec) + L-serine + ATP = L-seryl-tRNA(Sec) + AMP + diphosphate + H(+). It functions in the pathway aminoacyl-tRNA biosynthesis; selenocysteinyl-tRNA(Sec) biosynthesis; L-seryl-tRNA(Sec) from L-serine and tRNA(Sec): step 1/1. Catalyzes the attachment of serine to tRNA(Ser). Is also able to aminoacylate tRNA(Sec) with serine, to form the misacylated tRNA L-seryl-tRNA(Sec), which will be further converted into selenocysteinyl-tRNA(Sec). The chain is Serine--tRNA ligase from Streptococcus pneumoniae (strain JJA).